The primary structure comprises 100 residues: Small ribosomal subunit protein uS14 (100 aa).

Belongs to the universal ribosomal protein uS14 family. In terms of assembly, part of the 30S ribosomal subunit. Contacts proteins S3 and S10.

Its function is as follows. Binds 16S rRNA, required for the assembly of 30S particles and may also be responsible for determining the conformation of the 16S rRNA at the A site. The polypeptide is Small ribosomal subunit protein uS14 (Prochlorococcus marinus (strain MIT 9303)).